The chain runs to 128 residues: Small ribosomal subunit protein uS9 (128 aa).

The protein belongs to the universal ribosomal protein uS9 family. As to quaternary structure, part of the 30S ribosomal subunit. Contacts proteins S7 and S10.

Functionally, part of the top of the head of the 30S subunit. The C-terminal region penetrates the head emerging in the P-site where it contacts tRNA. The polypeptide is Small ribosomal subunit protein uS9 (rpsI) (Thermus thermophilus (strain ATCC BAA-163 / DSM 7039 / HB27)).